A 198-amino-acid polypeptide reads, in one-letter code: MQYPEPIAKLIESYMKLPGIGNKTATRLAFYTIDMNEDDVTNFAKNLISARRDLHYCSVCGNITDEDPCEICRDTARSQEMILVVEQPKDVMSMERMNDYHGLYHVLHGVLSPIEGKGPDDINIANLIKRLQKTPAKEVIIATNATPEGEATAMYISRLIKPAGIKVTRLAHGLAVGSDIEYADEMTLLKAVEGRQEI.

The C4-type zinc finger occupies 57–72 (CSVCGNITDEDPCEIC). In terms of domain architecture, Toprim spans 80–175 (EMILVVEQPK…KVTRLAHGLA (96 aa)).

This sequence belongs to the RecR family.

Its function is as follows. May play a role in DNA repair. It seems to be involved in an RecBC-independent recombinational process of DNA repair. It may act with RecF and RecO. The chain is Recombination protein RecR from Latilactobacillus sakei subsp. sakei (strain 23K) (Lactobacillus sakei subsp. sakei).